A 701-amino-acid polypeptide reads, in one-letter code: Elongation factor G 1 (701 aa).

Positions 5–281 (SKYRNIGIFA…AVVDYLPSPT (277 aa)) constitute a tr-type G domain. Residues 14-21 (AHVDAGKT), 78-82 (DTPGH), and 132-135 (NKLD) contribute to the GTP site.

It belongs to the TRAFAC class translation factor GTPase superfamily. Classic translation factor GTPase family. EF-G/EF-2 subfamily.

It is found in the cytoplasm. Functionally, catalyzes the GTP-dependent ribosomal translocation step during translation elongation. During this step, the ribosome changes from the pre-translocational (PRE) to the post-translocational (POST) state as the newly formed A-site-bound peptidyl-tRNA and P-site-bound deacylated tRNA move to the P and E sites, respectively. Catalyzes the coordinated movement of the two tRNA molecules, the mRNA and conformational changes in the ribosome. The protein is Elongation factor G 1 of Colwellia psychrerythraea (strain 34H / ATCC BAA-681) (Vibrio psychroerythus).